The primary structure comprises 262 residues: Enoyl-[acyl-carrier-protein] reductase [NADH] FabI (262 aa).

Residues G13, 19-20 (SI), Q40, 64-65 (DV), and I92 each bind NAD(+). A95 provides a ligand contact to substrate. Active-site proton acceptor residues include Y146 and Y156. Residues K163 and 192 to 196 (IRTLA) each bind NAD(+).

Belongs to the short-chain dehydrogenases/reductases (SDR) family. FabI subfamily. As to quaternary structure, homotetramer.

It carries out the reaction a 2,3-saturated acyl-[ACP] + NAD(+) = a (2E)-enoyl-[ACP] + NADH + H(+). The catalysed reaction is (2E)-butenoyl-[ACP] + NADH + H(+) = butanoyl-[ACP] + NAD(+). It catalyses the reaction (2E)-decenoyl-[ACP] + NADH + H(+) = decanoyl-[ACP] + NAD(+). The enzyme catalyses (2E)-hexadecenoyl-[ACP] + NADH + H(+) = hexadecanoyl-[ACP] + NAD(+). It carries out the reaction (2E,9Z)-hexadecadienoyl-[ACP] + NADH + H(+) = (9Z)-hexadecenoyl-[ACP] + NAD(+). The catalysed reaction is (2E)-5-methylhexenoyl-[ACP] + NADH + H(+) = 5-methylhexanoyl-[ACP] + NAD(+). The protein operates within lipid metabolism; fatty acid biosynthesis. It participates in cofactor biosynthesis; biotin biosynthesis. With respect to regulation, inhibited by diazaborines, triclosan (5-chloro-2-2,4-dichlorophenoxyphenol), 1,4-disubstituted imidazoles, 1,4-benzodiazepine derivatives, naphthyridinone derivatives, luteolin and curcumin. The antibiotic diazaborine interferes with the activity by binding to the protein and NAD. In terms of biological role, catalyzes the reduction of a carbon-carbon double bond in an enoyl moiety that is covalently linked to an acyl carrier protein (ACP). Involved in the elongation cycle of fatty acid which are used in the lipid metabolism and in the biotin biosynthesis. The sequence is that of Enoyl-[acyl-carrier-protein] reductase [NADH] FabI (fabI) from Escherichia coli (strain K12).